We begin with the raw amino-acid sequence, 31 residues long: MELLIQLTSLLLIVIAGPLVIALLFLKQGNL.

Residues 5–25 (IQLTSLLLIVIAGPLVIALLF) traverse the membrane as a helical segment.

It belongs to the Psb30/Ycf12 family. As to quaternary structure, PSII is composed of 1 copy each of membrane proteins PsbA, PsbB, PsbC, PsbD, PsbE, PsbF, PsbH, PsbI, PsbJ, PsbK, PsbL, PsbM, PsbT, PsbX, PsbY, PsbZ, Psb30/Ycf12, peripheral proteins of the oxygen-evolving complex and a large number of cofactors. It forms dimeric complexes.

Its subcellular location is the plastid. It is found in the chloroplast thylakoid membrane. Its function is as follows. A core subunit of photosystem II (PSII), probably helps stabilize the reaction center. The sequence is that of Photosystem II reaction center protein Psb30 from Phacus acuminatus.